The primary structure comprises 815 residues: Lon protease 1 (815 aa).

In terms of domain architecture, Lon N-terminal spans 14 to 211 (IAILPLLGTV…KLNEVLTREL (198 aa)). 370–377 (GPPGVGKT) contributes to the ATP binding site. The Lon proteolytic domain occupies 606 to 787 (TDRPGIVTGL…GQVIELALRA (182 aa)). Active-site residues include S693 and K736.

Belongs to the peptidase S16 family. In terms of assembly, homohexamer. Organized in a ring with a central cavity.

The protein localises to the cytoplasm. The catalysed reaction is Hydrolysis of proteins in presence of ATP.. Its function is as follows. ATP-dependent serine protease that mediates the selective degradation of mutant and abnormal proteins as well as certain short-lived regulatory proteins. Required for cellular homeostasis and for survival from DNA damage and developmental changes induced by stress. Degrades polypeptides processively to yield small peptide fragments that are 5 to 10 amino acids long. Binds to DNA in a double-stranded, site-specific manner. The polypeptide is Lon protease 1 (Herpetosiphon aurantiacus (strain ATCC 23779 / DSM 785 / 114-95)).